The sequence spans 284 residues: Trimeric intracellular cation channel type B-A (284 aa).

The Lumenal portion of the chain corresponds to 1 to 15; sequence MESLSELSVQFSQLS. The chain crosses the membrane as a helical span at residues 16–33; that stretch reads MFPFFDMAHYVVSVMSAR. Topologically, residues 34–46 are cytoplasmic; sequence EQAGALDIAARSP. The helical transmembrane segment at 47 to 68 threads the bilayer; it reads MASWFSAMLYCFGGGILSSILL. Over 69–79 the chain is Lumenal; the sequence is AEPPIAVLSNT. A helical membrane pass occupies residues 80 to 99; sequence TNIMLASTIWYMVYYFPYDL. At 100 to 102 the chain is on the cytoplasmic side; that stretch reads FYN. A helical transmembrane segment spans residues 103-121; that stretch reads CFFFLPIRLIIAGMKEVTR. The a 1,2-diacyl-sn-glycero-3-phospho-(1D-myo-inositol-4,5-bisphosphate) site is built by K117 and R121. The Lumenal segment spans residues 122 to 137; it reads TWKILSGVTHAHSHYK. Residues 138 to 155 form a helical membrane-spanning segment; sequence DALLVMITIGWARGAGGG. Residues 156 to 177 lie on the Cytoplasmic side of the membrane; sequence LISNFEQLVRGVWKPESNEFLK. Residues 178–195 traverse the membrane as a helical segment; that stretch reads MSYPVKVTLIGAVLFTLQ. Residues 196–206 lie on the Lumenal side of the membrane; that stretch reads HGHYLPISRHN. Residues 207–224 form a helical membrane-spanning segment; sequence LMLIYTMFLVLIKVTMML. Residues 225–284 lie on the Cytoplasmic side of the membrane; the sequence is THSTASPFLPLETPLQRILFGQRQKPSEVRQSASSSGAKGKPSKKTLDKDSGEQSKKKDS. The interval 246-284 is disordered; sequence QRQKPSEVRQSASSSGAKGKPSKKTLDKDSGEQSKKKDS. Over residues 269–284 the composition is skewed to basic and acidic residues; that stretch reads KTLDKDSGEQSKKKDS.

This sequence belongs to the TMEM38 family. As to quaternary structure, homotrimer; conformation seems to be controled by binding to diacylglycerol (DAG).

Its subcellular location is the endoplasmic reticulum membrane. The enzyme catalyses K(+)(in) = K(+)(out). Its activity is regulated as follows. Channel activity is activated by increased cytosolic Ca(2+) levels and blocked by luminal high Ca(2+) levels. Intracellular monovalent cation channel required for maintenance of rapid intracellular calcium release. Acts as a potassium counter-ion channel that functions in synchronization with calcium release from intracellular stores. Activated by increased cytosolic Ca(2+) levels. In Xenopus laevis (African clawed frog), this protein is Trimeric intracellular cation channel type B-A (tmem38b-a).